A 328-amino-acid polypeptide reads, in one-letter code: Transcriptional regulator protein Pur-beta-B (328 aa).

Disordered stretches follow at residues 1–35 (MADG…ELAS), 100–124 (SPEQ…RALK), and 289–328 (QERQ…VDDD). N-acetylalanine is present on Ala-2. The span at 9-18 (ERGGSSGGPS) shows a compositional bias: gly residues. Basic and acidic residues predominate over residues 24–35 (MSREQETQELAS). A DNA-binding region spans residues 27–260 (EQETQELASK…LRVSEVKPSY (234 aa)). Basic and acidic residues predominate over residues 289–303 (QERQRDKMYDRRGPG). A compositionally biased stretch (gly residues) spans 304-317 (ERGGSLGPGAGGGG). The segment covering 318 to 328 (DDSETEDVDDD) has biased composition (acidic residues).

Belongs to the PUR DNA-binding protein family.

The protein resides in the nucleus. In terms of biological role, transcriptional regulator which can act as an activator or a repressor. The sequence is that of Transcriptional regulator protein Pur-beta-B (purb-b) from Xenopus laevis (African clawed frog).